Reading from the N-terminus, the 314-residue chain is 3'-5' exoribonuclease YhaM (314 aa).

Positions 14 to 90 (VDLYLLIKSS…QLKLRNIRPA (77 aa)) form a DNA-binding region, OB. The region spanning 163–279 (HVVSMLNLAK…LHYIDNLDAK (117 aa)) is the HD domain.

It belongs to the YhaM family.

Shows a 3'-5' exoribonuclease activity. The protein is 3'-5' exoribonuclease YhaM of Bacillus licheniformis (strain ATCC 14580 / DSM 13 / JCM 2505 / CCUG 7422 / NBRC 12200 / NCIMB 9375 / NCTC 10341 / NRRL NRS-1264 / Gibson 46).